We begin with the raw amino-acid sequence, 555 residues long: DNA-directed primase/polymerase protein (555 aa).

Residues 1 to 22 (MKRKWEATLKQIEERASHYERK) are a coiled coil. Substrate contacts are provided by residues arginine 76, 114–116 (DLE), and 165–169 (KFSRH). Mn(2+)-binding residues include aspartate 114 and glutamate 116. A disordered region spans residues 210 to 230 (ETTGHEFTHFSETPSEQGTCF). A compositionally biased stretch (polar residues) spans 219 to 230 (FSETPSEQGTCF). Residue serine 255 is modified to Phosphoserine. Substrate is bound by residues 288–291 (RNFR) and lysine 297. Zn(2+) is bound by residues cysteine 418, histidine 425, cysteine 445, and cysteine 450. Residues 418 to 451 (CENIGRAHRSNNIMILVDLKNEVWYQKCHDPVCK) carry the Zinc knuckle motif motif. A disordered region spans residues 480 to 503 (TDTTADTETKSPHGPSSSVLSKGA). Residues 480–555 (TDTTADTETK…DELLIEVLQE (76 aa)) are interaction with RPA1. Short sequence motifs (RPA1-binding motif) lie at residues 509–523 (WDNGIDDTYILEATE) and 543–551 (EIPDELLIE).

This sequence belongs to the eukaryotic-type primase small subunit family. In terms of assembly, interacts with RPA1; leading to recruitment to chromatin and stimulate DNA primase activity. Interacts with SSBP1. Interacts with POLDIP2; leading to enhance DNA polymerase activity. Mn(2+) serves as cofactor.

The protein resides in the nucleus. Its subcellular location is the mitochondrion matrix. It localises to the chromosome. It catalyses the reaction ssDNA + n NTP = ssDNA/pppN(pN)n-1 hybrid + (n-1) diphosphate.. It carries out the reaction DNA(n) + a 2'-deoxyribonucleoside 5'-triphosphate = DNA(n+1) + diphosphate. Functionally, DNA primase and DNA polymerase required to tolerate replication-stalling lesions by bypassing them. Required to facilitate mitochondrial and nuclear replication fork progression by initiating de novo DNA synthesis using dNTPs and acting as an error-prone DNA polymerase able to bypass certain DNA lesions. Shows a high capacity to tolerate DNA damage lesions such as 8oxoG and abasic sites in DNA. Provides different translesion synthesis alternatives when DNA replication is stalled: able to synthesize DNA primers downstream of lesions, such as ultraviolet (UV) lesions, R-loops and G-quadruplexes, to allow DNA replication to continue. Can also realign primers ahead of 'unreadable lesions' such as abasic sites and 6-4 photoproduct (6-4 pyrimidine-pyrimidinone), thereby skipping the lesion. Repriming avoids fork degradation while leading to accumulation of internal ssDNA gaps behind the forks. Also able to incorporate nucleotides opposite DNA lesions such as 8oxoG, like a regular translesion synthesis DNA polymerase. Also required for reinitiating stalled forks after UV damage during nuclear DNA replication. Required for mitochondrial DNA (mtDNA) synthesis and replication, by reinitiating synthesis after UV damage or in the presence of chain-terminating nucleotides. Prevents APOBEC family-mediated DNA mutagenesis by repriming downstream of abasic site to prohibit error-prone translesion synthesis. Has non-overlapping function with POLH. In addition to its role in DNA damage response, also required to maintain efficient nuclear and mitochondrial DNA replication in unperturbed cells. The sequence is that of DNA-directed primase/polymerase protein from Bos taurus (Bovine).